A 516-amino-acid chain; its full sequence is Sodium channel protein Nach (516 aa).

Residues 1-49 (MGHEEELSPEQVDLKVSPLMGSLKRTWNDFCATSSIHGLRYTRDEDTNR) are Cytoplasmic-facing. A helical transmembrane segment spans residues 50–70 (IVHFVWLLISLVMFICAVVMA). Residues 71–452 (RTFYIDFRSN…LVSNLGSAFS (382 aa)) are Extracellular-facing. N-linked (GlcNAc...) asparagine glycans are attached at residues Asn-128, Asn-165, Asn-220, and Asn-348. A helical transmembrane segment spans residues 453–473 (LFVGMSMLSVVEIMYYFSVIL). Topologically, residues 474 to 516 (RKNYVLECEARKKMLHKGPKFAWPKANDSHSKHQKSVFIIHKM) are cytoplasmic.

Belongs to the amiloride-sensitive sodium channel (TC 1.A.6) family.

The protein resides in the membrane. Its function is as follows. Part of a complex that plays a role in tracheal liquid clearance. Probable role in sodium transport. This chain is Sodium channel protein Nach (Nach), found in Drosophila ananassae (Fruit fly).